Here is a 281-residue protein sequence, read N- to C-terminus: Putative integrase/recombinase y4rD (281 aa).

The Core-binding (CB) domain occupies 5-98 (LLLAPLLESY…AIRSFFHHVA (94 aa)). The Tyr recombinase domain maps to 122–281 (EVTHHLTKAE…TMSGTENASV (160 aa)). Catalysis depends on residues arginine 162, lysine 188, histidine 262, and arginine 265.

Belongs to the 'phage' integrase family.

Seems to be non-functional. In Sinorhizobium fredii (strain NBRC 101917 / NGR234), this protein is Putative integrase/recombinase y4rD.